The primary structure comprises 573 residues: Protein phosphatase EYA3 (573 aa).

Met-1 is subject to N-acetylmethionine. Disordered regions lie at residues 1–46 (MEEE…LASN) and 236–296 (TYQS…DATS). A compositionally biased stretch (polar residues) spans 20 to 46 (SGEQTISQVSNPDVSDQKPETSSLASN). Residues 254–271 (LSSGDPSTSPSLSQTTPS) are compositionally biased toward low complexity. Phosphoserine occurs at positions 262 and 266. Residue Asp-309 is the Nucleophile of the active site. Residues Asp-309 and Asp-311 each coordinate Mg(2+). Asp-311 functions as the Proton donor in the catalytic mechanism. Phosphoserine is present on residues Ser-438 and Ser-472. Position 537 (Asp-537) interacts with Mg(2+).

It belongs to the HAD-like hydrolase superfamily. EYA family. As to quaternary structure, interacts with SIX1 and DACH1, and probably SIX2, SIX4, SIX5. Mg(2+) is required as a cofactor. Ser-266 phosphorylation is required for localization at sites of DNA damage and directing interaction with H2AX.

It is found in the cytoplasm. Its subcellular location is the nucleus. It carries out the reaction O-phospho-L-tyrosyl-[protein] + H2O = L-tyrosyl-[protein] + phosphate. Tyrosine phosphatase that specifically dephosphorylates 'Tyr-142' of histone H2AX (H2AXY142ph). 'Tyr-142' phosphorylation of histone H2AX plays a central role in DNA repair and acts as a mark that distinguishes between apoptotic and repair responses to genotoxic stress. Promotes efficient DNA repair by dephosphorylating H2AX, promoting the recruitment of DNA repair complexes containing MDC1. Its function as histone phosphatase probably explains its role in transcription regulation during organogenesis. Coactivates SIX1, and seems to coactivate SIX2, SIX4 and SIX5. The repression of precursor cell proliferation in myoblasts by SIX1 is switched to activation through recruitment of EYA3 to the SIX1-DACH1 complex and seems to be dependent on EYA3 phosphatase activity. May be involved in development of the eye. The protein is Protein phosphatase EYA3 (EYA3) of Homo sapiens (Human).